An 86-amino-acid chain; its full sequence is Toxin Tpa6 (86 aa).

Positions 1 to 20 (MSIFPIALALLLIGLEEGEA) are cleaved as a signal peptide. Residues 22 to 85 (RDGYPLSKNN…WGDPGTKPCM (64 aa)) enclose the LCN-type CS-alpha/beta domain. 4 disulfides stabilise this stretch: cysteine 33-cysteine 84, cysteine 37-cysteine 58, cysteine 43-cysteine 64, and cysteine 47-cysteine 66.

It belongs to the long (4 C-C) scorpion toxin superfamily. Sodium channel inhibitor family. Beta subfamily. Expressed by the venom gland.

The protein localises to the secreted. Functionally, beta toxins bind voltage-independently at site-4 of sodium channels (Nav) and shift the voltage of activation toward more negative potentials thereby affecting sodium channel activation and promoting spontaneous and repetitive firing. This is Toxin Tpa6 from Tityus pachyurus (Colombian scorpion).